The following is a 169-amino-acid chain: Peptide deformylase (169 aa).

Cysteine 91 and histidine 133 together coordinate Fe cation. Glutamate 134 is a catalytic residue. Histidine 137 is a binding site for Fe cation.

The protein belongs to the polypeptide deformylase family. Fe(2+) serves as cofactor.

The catalysed reaction is N-terminal N-formyl-L-methionyl-[peptide] + H2O = N-terminal L-methionyl-[peptide] + formate. Removes the formyl group from the N-terminal Met of newly synthesized proteins. Requires at least a dipeptide for an efficient rate of reaction. N-terminal L-methionine is a prerequisite for activity but the enzyme has broad specificity at other positions. This Klebsiella pneumoniae subsp. pneumoniae (strain ATCC 700721 / MGH 78578) protein is Peptide deformylase.